The chain runs to 296 residues: Protoheme IX farnesyltransferase (296 aa).

The next 9 helical transmembrane spans lie at 29-49, 54-74, 98-118, 121-141, 147-167, 175-195, 221-241, 246-266, and 275-295; these read LSGLVIVTSAGGLALAPGHVA, ALTVLATAAVVGAANALNCWM, FTALGLGIMVPVFALPVLALV, PLTAALAFVALVTYVAVYTPM, LALLVGAVPGAIPPLMGWTAA, GLALFALLFAWQLPHFLAVSI, WIAATAAALVPVSLLLVPLRV, YGAVAAVLGVALAGYAFAGVG, and NFFLATILYLTLLFVALFLGA.

It belongs to the UbiA prenyltransferase family. Protoheme IX farnesyltransferase subfamily.

It is found in the cell inner membrane. It catalyses the reaction heme b + (2E,6E)-farnesyl diphosphate + H2O = Fe(II)-heme o + diphosphate. It participates in porphyrin-containing compound metabolism; heme O biosynthesis; heme O from protoheme: step 1/1. In terms of biological role, converts heme B (protoheme IX) to heme O by substitution of the vinyl group on carbon 2 of heme B porphyrin ring with a hydroxyethyl farnesyl side group. The sequence is that of Protoheme IX farnesyltransferase from Anaeromyxobacter sp. (strain Fw109-5).